A 245-amino-acid polypeptide reads, in one-letter code: Phycoerythrobilin:ferredoxin oxidoreductase (245 aa).

This sequence belongs to the HY2 family.

It catalyses the reaction (3Z)-phycoerythrobilin + oxidized 2[4Fe-4S]-[ferredoxin] = 15,16-dihydrobiliverdin + reduced 2[4Fe-4S]-[ferredoxin] + 2 H(+). In terms of biological role, catalyzes the two-electron reduction of the C2 and C3(1) diene system of 15,16-dihydrobiliverdin. The polypeptide is Phycoerythrobilin:ferredoxin oxidoreductase (pebB) (Gloeobacter violaceus (strain ATCC 29082 / PCC 7421)).